The chain runs to 408 residues: Phosphoglycerate kinase (408 aa).

Residues 22-24 (DIN), Arg-39, 60-63 (HQSR), Arg-117, and Arg-157 contribute to the substrate site. ATP is bound by residues Glu-332 and 358 to 361 (GGHT).

This sequence belongs to the phosphoglycerate kinase family. In terms of assembly, monomer.

It is found in the cytoplasm. It catalyses the reaction (2R)-3-phosphoglycerate + ATP = (2R)-3-phospho-glyceroyl phosphate + ADP. It participates in carbohydrate degradation; glycolysis; pyruvate from D-glyceraldehyde 3-phosphate: step 2/5. In Thermoplasma volcanium (strain ATCC 51530 / DSM 4299 / JCM 9571 / NBRC 15438 / GSS1), this protein is Phosphoglycerate kinase.